The sequence spans 529 residues: GTPase Obg (529 aa).

The Obg domain occupies 2–159; that stretch reads ASFVDRVVLH…SDIVLELKSI (158 aa). Residues 160–343 form the OBG-type G domain; the sequence is ADIALVGFPS…LGFAMAEIVK (184 aa). GTP-binding positions include 166-173, 191-195, 212-215, 295-298, and 324-326; these read GFPSAGKS, FTTLI, DVPG, NKVD, and SAT. Mg(2+) contacts are provided by Ser173 and Thr193. An OCT domain is found at 363 to 447; that stretch reads PRAVNETGFR…DDGVVFDWEP (85 aa). Residues 461–529 are disordered; that stretch reads GTDIRFADTG…ESGLDSGDES (69 aa). Basic and acidic residues predominate over residues 462–502; that stretch reads TDIRFADTGDRPTRSQKREEQQERRDAKAAARAELEAERKA.

This sequence belongs to the TRAFAC class OBG-HflX-like GTPase superfamily. OBG GTPase family. In terms of assembly, monomer. Requires Mg(2+) as cofactor.

It is found in the cytoplasm. In terms of biological role, an essential GTPase which binds GTP, GDP and possibly (p)ppGpp with moderate affinity, with high nucleotide exchange rates and a fairly low GTP hydrolysis rate. Plays a role in control of the cell cycle, stress response, ribosome biogenesis and in those bacteria that undergo differentiation, in morphogenesis control. In Pseudarthrobacter chlorophenolicus (strain ATCC 700700 / DSM 12829 / CIP 107037 / JCM 12360 / KCTC 9906 / NCIMB 13794 / A6) (Arthrobacter chlorophenolicus), this protein is GTPase Obg.